Reading from the N-terminus, the 186-residue chain is Ribosome-recycling factor (186 aa).

This sequence belongs to the RRF family.

Its subcellular location is the cytoplasm. In terms of biological role, responsible for the release of ribosomes from messenger RNA at the termination of protein biosynthesis. May increase the efficiency of translation by recycling ribosomes from one round of translation to another. In Amoebophilus asiaticus (strain 5a2), this protein is Ribosome-recycling factor.